A 482-amino-acid chain; its full sequence is Beta-1,3-glucan-binding protein 2 (482 aa).

The N-terminal stretch at 1-18 (MWIKSVCLFATIAGCLGQ) is a signal peptide. The CBM39 domain maps to 23-122 (YKVPDAKLEA…GEWTVTEFVN (100 aa)). Asparagine 124 is a glycosylation site (N-linked (GlcNAc...) asparagine). The interval 127 to 153 (VVDTSTAPPPVAPAVSEEDQSPGPQWR) is disordered. Positions 128–482 (VDTSTAPPPV…KVDYVRVYAL (355 aa)) constitute a GH16 domain. N-linked (GlcNAc...) asparagine glycosylation occurs at asparagine 189.

In terms of assembly, monomer. N-glycosylated. In terms of tissue distribution, cuticle and fat body.

The protein resides in the secreted. Involved in the recognition of invading microorganisms. Binds specifically to beta-1,3-glucan and lipoteichoic acid and causes aggregation of invading microorganisms. Binding to beta-1,3-glucan activates the phenoloxidase cascade. The sequence is that of Beta-1,3-glucan-binding protein 2 from Manduca sexta (Tobacco hawkmoth).